The primary structure comprises 647 residues: Probable potassium transport system protein Kup (647 aa).

Transmembrane regions (helical) follow at residues Ile-32–Tyr-52, Val-74–Val-94, Leu-124–Thr-144, Phe-166–Thr-186, Phe-193–Ile-213, Phe-230–Thr-250, Trp-271–Leu-291, Pro-300–Ala-320, Val-322–Leu-342, Ile-361–Phe-381, Ala-390–Met-410, Thr-418–Ala-438, and Ile-443–Thr-463.

Belongs to the HAK/KUP transporter (TC 2.A.72) family.

It is found in the cell inner membrane. The catalysed reaction is K(+)(in) + H(+)(in) = K(+)(out) + H(+)(out). Transport of potassium into the cell. Likely operates as a K(+):H(+) symporter. This Polynucleobacter asymbioticus (strain DSM 18221 / CIP 109841 / QLW-P1DMWA-1) (Polynucleobacter necessarius subsp. asymbioticus) protein is Probable potassium transport system protein Kup.